We begin with the raw amino-acid sequence, 708 residues long: MRSPSRLPHETRDSRQRTPKTDMRGLYQRAIKESFVKLHPKIAVRNPVMFIVWVGTIVTFLVTLNPNLFGTVQANINQQRLLNGLITLILFFTVLFANFAEAVAEGRGKAQADSLKATRSDTIAWKVLPNGSLEKIGSTQLRRGDVIKVVANDMIPGDGEVIQGIGSVDESAITGESAPVLKQPGTDIASSVTGGTRLLSDELIIRITADPGQGFIDRMISLVEGAERSKTPNEIALTVLLAVLTQVFLIVVATMPSFVNYIANFISTAFGAEAANSLRAGASIAILISLLVALIPTTIGGLLSAIGIAGMDRVAQFNVIATSGRAVEACGDINSLVLDKTGTITFGNRMADEFIPVNSYTVEDVARIAKLASLFDETPEGKSIVKLAEKYKILADVNLNQAEGVEFSAKTRMSGTNLPNGKQVRKGAVDAIKGFIRSRGGSIPSDVDVAYERVSLLGGTPLAVCQDNEIFGVIYLKDIVKSGLRERFEQLRRMGVKTIMLTGDNHITASVIAQEAGVDDFIAEATPEDKIDVIRNEQSQGKLVAMTGDGTNDAPALAQANVGLAMNSGTQAAKEAANMVDLDSDPTKLIDLVTIGKQLLITRGALTTFSIANDIAKYFAILPTIFGAAGIGALNIMGLKSAQSAIISALIYNALIIPALIPLALQGVKFRSLTADQLLRRNIFIYGLGGIIAPFIAIKLIDVILPFS.

Residues 1-23 are disordered; the sequence is MRSPSRLPHETRDSRQRTPKTDM. Residues 7 to 23 show a composition bias toward basic and acidic residues; that stretch reads LPHETRDSRQRTPKTDM. 4 helical membrane passes run 49 to 69, 84 to 104, 235 to 255, and 283 to 303; these read MFIV…PNLF, GLIT…EAVA, IALT…VATM, and SIAI…GGLL. Asp339 functions as the 4-aspartylphosphate intermediate in the catalytic mechanism. Residues Asp376, Glu380, 407 to 414, and Lys426 each bind ATP; that span reads FSAKTRMS. Positions 549 and 553 each coordinate Mg(2+). The next 3 membrane-spanning stretches (helical) occupy residues 619 to 639, 645 to 665, and 683 to 703; these read FAIL…IMGL, AIIS…PLAL, and IFIY…LIDV.

It belongs to the cation transport ATPase (P-type) (TC 3.A.3) family. Type IA subfamily. The system is composed of three essential subunits: KdpA, KdpB and KdpC.

The protein localises to the cell inner membrane. The enzyme catalyses K(+)(out) + ATP + H2O = K(+)(in) + ADP + phosphate + H(+). Its function is as follows. Part of the high-affinity ATP-driven potassium transport (or Kdp) system, which catalyzes the hydrolysis of ATP coupled with the electrogenic transport of potassium into the cytoplasm. This subunit is responsible for energy coupling to the transport system and for the release of the potassium ions to the cytoplasm. This chain is Potassium-transporting ATPase ATP-binding subunit 2, found in Nostoc sp. (strain PCC 7120 / SAG 25.82 / UTEX 2576).